The following is a 242-amino-acid chain: Small ribosomal subunit protein uS2 (242 aa).

This sequence belongs to the universal ribosomal protein uS2 family.

This is Small ribosomal subunit protein uS2 from Shewanella woodyi (strain ATCC 51908 / MS32).